A 426-amino-acid chain; its full sequence is MIDVKDLSENPDKFRASQRARGADESVVDAIISADSDRRAALIRHETLRAEQNAFGKKVAQAKGEEKQALLAEVKELANSVKAASAEAAAAQAKQEELLRVIPNLVVDGVPEGGEDDYVVLKTVGTPREFTDFEPKDHLEIGELIGAIDMERGAKVSGSRFYFLRGVGARLEMALLQMAMEQAIDAGFVPMITPTLVRPETMQGTGFDVKHDAEIYRLAEDDLYLVGTSEVALAGYHADEILDLSAGPIRYAGQSSCYRREAGSHGKDTRGIIRVHQFNKVEMFIYTTVEEAAAEHERLLAWEEEMLAKCELPYRVIDTAAGDLGMSAARKFDCEAWVPTQNAYRELTSTSNCTTFQARRLNIRERVINDEGVAKGTRAVATLNGTLATTRWIVAILEHHQNPDGSVNVPKALQKYLGGLEVLPVL.

Positions 1–15 (MIDVKDLSENPDKFR) are enriched in basic and acidic residues. The tract at residues 1–20 (MIDVKDLSENPDKFRASQRA) is disordered. 228 to 230 (TSE) lines the L-serine pocket. Residues 259–261 (RRE) and V275 contribute to the ATP site. An L-serine-binding site is contributed by E282. Residue 346 to 349 (ELTS) participates in ATP binding. T386 serves as a coordination point for L-serine.

The protein belongs to the class-II aminoacyl-tRNA synthetase family. Type-1 seryl-tRNA synthetase subfamily. Homodimer. The tRNA molecule binds across the dimer.

It is found in the cytoplasm. It carries out the reaction tRNA(Ser) + L-serine + ATP = L-seryl-tRNA(Ser) + AMP + diphosphate + H(+). The catalysed reaction is tRNA(Sec) + L-serine + ATP = L-seryl-tRNA(Sec) + AMP + diphosphate + H(+). It participates in aminoacyl-tRNA biosynthesis; selenocysteinyl-tRNA(Sec) biosynthesis; L-seryl-tRNA(Sec) from L-serine and tRNA(Sec): step 1/1. Functionally, catalyzes the attachment of serine to tRNA(Ser). Is also able to aminoacylate tRNA(Sec) with serine, to form the misacylated tRNA L-seryl-tRNA(Sec), which will be further converted into selenocysteinyl-tRNA(Sec). The protein is Serine--tRNA ligase of Paenarthrobacter aurescens (strain TC1).